The following is a 73-amino-acid chain: Neurogranin (73 aa).

An IQ domain is found at 26 to 55; it reads ANAAAAKIQASFRGHMTRKKIKGGEIDRKT. Serine 36 carries the phosphoserine; by PKC modification. Residues 47-59 are compositionally biased toward basic and acidic residues; that stretch reads KGGEIDRKTKDAE. The segment at 47–73 is disordered; the sequence is KGGEIDRKTKDAECANSTRGGDLRNGD.

Belongs to the neurogranin family.

Its function is as follows. Acts as a 'third messenger' substrate of protein kinase C-mediated molecular cascades during synaptic development and remodeling. Binds to calmodulin in the absence of calcium. In Serinus canaria (Island canary), this protein is Neurogranin (NRGN).